Reading from the N-terminus, the 484-residue chain is Arachin Ahy-3 (484 aa).

An N-terminal signal peptide occupies residues 1-20 (MAKLLALSVCFCFLVLGASS). Cystine bridges form between Cys32-Cys65 and Cys108-Cys305. The region spanning 35-253 (QRLNAQRPDN…GFQVNEDIVR (219 aa)) is the Cupin type-1 1 domain. Residues 208–233 (QQRSGRQSPKGEEQEQEQENEGGNVF) form a disordered region. The propeptide occupies 295–298 (DFNN). One can recognise a Cupin type-1 2 domain in the interval 311-460 (MNIGKSTSAD…SYGLQYEQAR (150 aa)). Residues 479 to 484 (MIRTVA) constitute a propeptide that is removed on maturation.

It belongs to the 11S seed storage protein (globulins) family. Hexamer; each subunit is composed of an acidic and a basic chain derived from a single precursor and linked by a disulfide bond.

The protein is Arachin Ahy-3 of Arachis hypogaea (Peanut).